Reading from the N-terminus, the 410-residue chain is Exopolygalacturonase (410 aa).

Residues 1 to 22 (MACTNNAMRALFLLVLFCIVHG) form the signal peptide. Asn89 carries N-linked (GlcNAc...) asparagine glycosylation. 5 PbH1 repeats span residues 192–218 (CKDMLIKDVTVTAPGDSPNTDGIHMGD), 219–240 (SSGITITNTVIGVGDDCISIGP), 242–262 (TSKVNITGVTCGPGHGISIGS), 272–293 (VTDINVKDCTLKKTMFGVRIKA), and 337–377 (ASKV…TMDD). The active-site Proton donor is the Asp233. Cys235 and Cys252 are disulfide-bonded. The N-linked (GlcNAc...) asparagine glycan is linked to Asn246. His256 is a catalytic residue. N-linked (GlcNAc...) asparagine glycosylation occurs at Asn349. A disulfide bond links Cys364 and Cys370. An N-linked (GlcNAc...) asparagine glycan is attached at Asn387. A disulfide bridge links Cys393 with Cys409.

The protein belongs to the glycosyl hydrolase 28 family. As to expression, pollen.

Its subcellular location is the secreted. The protein localises to the cell wall. It catalyses the reaction [(1-&gt;4)-alpha-D-galacturonosyl](n) + H2O = alpha-D-galacturonate + [(1-&gt;4)-alpha-D-galacturonosyl](n-1). Functionally, may function in depolymerizing pectin during pollen development, germination, and tube growth. Acts as an exo-polygalacturonase. This Zea mays (Maize) protein is Exopolygalacturonase (PG1).